A 492-amino-acid chain; its full sequence is MTAHFPFDNSYVALPPNFFARVAPTPVAAPRLIKLNRPLAVQLGLDPDLLETPEGAEILSGNQMPETAASIAMAYAGHQFGNFVPQLGDGRAILLGEVVDRNGVRRDIQLKGAGRTPFSRMGDGRAALGPVLREYIVSEAMAALGIPTTRSLAAVLTGETVLRDPIQPGAVLTRVASSHIRVGTFQYFAARGDLASVRALADHAIARHYPEAAQAPSPYLALLEGVIGRQAELVASWMMVGFIHGVMNTDNCSVAGETIDYGPCAFMDTFDPKTVYSSIDQFGRYAYGNQPPIALWNLTRLAECLVRLLADDDDKGIEIAQTALGGFAERFNAAYLAKLAAKLGLFTSQPDDQQLSQEFLTALAKGEADFTLAFRRLSDAAVDPSDLGEVRALFADPAAFDEWAPRWRARIAAEPQDATTRQAAMRRVNPAYTPRNHRIEAVIRAAVDRDDFAPFEEILTVLANPFEEKAEFARYAEPPQPHEEVLETFCGT.

ATP is bound by residues Gly-88, Gly-90, Arg-91, Lys-111, Asp-123, Gly-124, Arg-174, and Arg-181. The active-site Proton acceptor is Asp-250. Asn-251 and Asp-260 together coordinate Mg(2+). Asp-260 contributes to the ATP binding site.

It belongs to the SELO family. Requires Mg(2+) as cofactor. Mn(2+) serves as cofactor.

The enzyme catalyses L-seryl-[protein] + ATP = 3-O-(5'-adenylyl)-L-seryl-[protein] + diphosphate. The catalysed reaction is L-threonyl-[protein] + ATP = 3-O-(5'-adenylyl)-L-threonyl-[protein] + diphosphate. It catalyses the reaction L-tyrosyl-[protein] + ATP = O-(5'-adenylyl)-L-tyrosyl-[protein] + diphosphate. It carries out the reaction L-histidyl-[protein] + UTP = N(tele)-(5'-uridylyl)-L-histidyl-[protein] + diphosphate. The enzyme catalyses L-seryl-[protein] + UTP = O-(5'-uridylyl)-L-seryl-[protein] + diphosphate. The catalysed reaction is L-tyrosyl-[protein] + UTP = O-(5'-uridylyl)-L-tyrosyl-[protein] + diphosphate. Nucleotidyltransferase involved in the post-translational modification of proteins. It can catalyze the addition of adenosine monophosphate (AMP) or uridine monophosphate (UMP) to a protein, resulting in modifications known as AMPylation and UMPylation. The chain is Protein nucleotidyltransferase YdiU from Rhodopseudomonas palustris (strain TIE-1).